The primary structure comprises 417 residues: Exodeoxyribonuclease 7 large subunit (417 aa).

The protein belongs to the XseA family. In terms of assembly, heterooligomer composed of large and small subunits.

The protein resides in the cytoplasm. It catalyses the reaction Exonucleolytic cleavage in either 5'- to 3'- or 3'- to 5'-direction to yield nucleoside 5'-phosphates.. Bidirectionally degrades single-stranded DNA into large acid-insoluble oligonucleotides, which are then degraded further into small acid-soluble oligonucleotides. This chain is Exodeoxyribonuclease 7 large subunit, found in Lactococcus lactis subsp. lactis (strain IL1403) (Streptococcus lactis).